The primary structure comprises 243 residues: Amphiregulin (243 aa).

The N-terminal stretch at 1 to 24 is a signal peptide; that stretch reads MRTPSLSLALSVLSLLVLGSGHYA. Positions 25–96 are excised as a propeptide; it reads AGLELNGTSS…IVDDSVRVEQ (72 aa). N-linked (GlcNAc...) asparagine glycosylation is present at Asn-30. Positions 55–67 are enriched in polar residues; it reads STISEMPSGSELS. Disordered regions lie at residues 55–75 and 98–135; these read STIS…DYSE and IKPK…KKKN. Basic and acidic residues predominate over residues 98 to 113; the sequence is IKPKENKTEGEKSSEK. A glycan (N-linked (GlcNAc...) asparagine) is linked at Asn-103. The span at 114–135 shows a compositional bias: basic residues; the sequence is PKRKKKGGKGGKGRRNRKKKKN. An EGF-like domain is found at 133–173; sequence KKNPCAAKFQNFCIHGECRYIENLEVVTCHCHQDYFGERCG. 3 disulfide bridges follow: Cys-137/Cys-150, Cys-145/Cys-161, and Cys-163/Cys-172. A helical membrane pass occupies residues 190–213; the sequence is IALAAIIVFVSAVSVAAIGIITAV. A glycan (N-linked (GlcNAc...) asparagine) is linked at Asn-236.

It belongs to the amphiregulin family. As to quaternary structure, the immature precursor interacts with CNIH.

Its subcellular location is the membrane. Its function is as follows. Ligand of the EGF receptor/EGFR. Autocrine growth factor as well as a mitogen for a broad range of target cells including astrocytes, Schwann cells and fibroblasts. The polypeptide is Amphiregulin (Areg) (Rattus norvegicus (Rat)).